Reading from the N-terminus, the 534-residue chain is 2,3-bisphosphoglycerate-independent phosphoglycerate mutase (534 aa).

Mn(2+)-binding residues include Asp-15 and Ser-65. Ser-65 (phosphoserine intermediate) is an active-site residue. Substrate is bound by residues His-126, 156–157 (RD), Arg-188, Arg-194, 260–263 (RPDR), and Lys-333. 5 residues coordinate Mn(2+): Asp-400, His-404, Asp-441, His-442, and His-459.

This sequence belongs to the BPG-independent phosphoglycerate mutase family. As to quaternary structure, monomer. The cofactor is Mn(2+).

The enzyme catalyses (2R)-2-phosphoglycerate = (2R)-3-phosphoglycerate. Its pathway is carbohydrate degradation; glycolysis; pyruvate from D-glyceraldehyde 3-phosphate: step 3/5. Functionally, catalyzes the interconversion of 2-phosphoglycerate and 3-phosphoglycerate. The sequence is that of 2,3-bisphosphoglycerate-independent phosphoglycerate mutase from Acaryochloris marina (strain MBIC 11017).